The chain runs to 554 residues: CTP synthase (554 aa).

Positions 1–265 are amidoligase domain; that stretch reads MTPLIFVTGG…DELVIDQFKL (265 aa). Ser-13 lines the CTP pocket. Position 13 (Ser-13) interacts with UTP. Residues 14-19 and Asp-71 each bind ATP; that span reads SLGKGI. Residues Asp-71 and Glu-139 each coordinate Mg(2+). Residues 146–148, 186–191, and Lys-222 each bind CTP; these read DIE and KTKPTQ. UTP-binding positions include 186-191 and Lys-222; that span reads KTKPTQ. Residues 292–545 enclose the Glutamine amidotransferase type-1 domain; the sequence is TIAVVGKYVD…VRAAREKKAG (254 aa). An L-glutamine-binding site is contributed by Gly-353. Cys-380 serves as the catalytic Nucleophile; for glutamine hydrolysis. Residues 381-384, Glu-404, and Arg-471 each bind L-glutamine; that span reads YGMQ. Catalysis depends on residues His-518 and Glu-520.

The protein belongs to the CTP synthase family. As to quaternary structure, homotetramer.

The enzyme catalyses UTP + L-glutamine + ATP + H2O = CTP + L-glutamate + ADP + phosphate + 2 H(+). It catalyses the reaction L-glutamine + H2O = L-glutamate + NH4(+). It carries out the reaction UTP + NH4(+) + ATP = CTP + ADP + phosphate + 2 H(+). It functions in the pathway pyrimidine metabolism; CTP biosynthesis via de novo pathway; CTP from UDP: step 2/2. Allosterically activated by GTP, when glutamine is the substrate; GTP has no effect on the reaction when ammonia is the substrate. The allosteric effector GTP functions by stabilizing the protein conformation that binds the tetrahedral intermediate(s) formed during glutamine hydrolysis. Inhibited by the product CTP, via allosteric rather than competitive inhibition. Catalyzes the ATP-dependent amination of UTP to CTP with either L-glutamine or ammonia as the source of nitrogen. Regulates intracellular CTP levels through interactions with the four ribonucleotide triphosphates. This is CTP synthase from Xanthomonas campestris pv. campestris (strain 8004).